Consider the following 419-residue polypeptide: UDP-N-acetylglucosamine 1-carboxyvinyltransferase (419 aa).

22–23 (KN) provides a ligand contact to phosphoenolpyruvate. Arginine 91 is a UDP-N-acetyl-alpha-D-glucosamine binding site. The active-site Proton donor is cysteine 115. A 2-(S-cysteinyl)pyruvic acid O-phosphothioketal modification is found at cysteine 115. UDP-N-acetyl-alpha-D-glucosamine-binding positions include 120 to 124 (RPVDL), 160 to 163 (KVSV), aspartate 305, and isoleucine 327.

This sequence belongs to the EPSP synthase family. MurA subfamily.

Its subcellular location is the cytoplasm. It catalyses the reaction phosphoenolpyruvate + UDP-N-acetyl-alpha-D-glucosamine = UDP-N-acetyl-3-O-(1-carboxyvinyl)-alpha-D-glucosamine + phosphate. It functions in the pathway cell wall biogenesis; peptidoglycan biosynthesis. Cell wall formation. Adds enolpyruvyl to UDP-N-acetylglucosamine. This is UDP-N-acetylglucosamine 1-carboxyvinyltransferase from Klebsiella pneumoniae (strain 342).